We begin with the raw amino-acid sequence, 319 residues long: Annexin A4 (319 aa).

Ala-2 is subject to N-acetylalanine. Thr-7 bears the Phosphothreonine mark. Ser-12 is modified (phosphoserine). Annexin repeat units lie at residues 14–85, 86–157, 169–241, and 245–316; these read FNAM…GMMT, PTVL…SLSA, ALVR…AIVK, and NKSA…VLCG. Lys-213, Lys-293, and Lys-300 each carry N6-acetyllysine.

It belongs to the annexin family.

It is found in the zymogen granule membrane. Its function is as follows. Calcium/phospholipid-binding protein which promotes membrane fusion and is involved in exocytosis. In Homo sapiens (Human), this protein is Annexin A4.